The chain runs to 591 residues: MVPSSPAVEKQVPVEPGPDPELRSWRHLVCYLCFYGFMAQIRPGESFITPYLLGPDKNFTREQVTNEITPVLSYSYLAVLVPVFLLTDYLRYTPVLLLQGLSFVSVWLLLLLGHSVAHMQLMELFYSVTMAARIAYSSYIFSLVRPARYQRVAGYSRAAVLLGVFTSSVLGQLLVTVGRVSFSTLNYISLAFLTFSVVLALFLKRPKRSLFFNRDDRGRCETSASELERMNPGPGGKLGHALRVACGDSVLARMLRELGDSLRRPQLRLWSLWWVFNSAGYYLVVYYVHILWNEVDPTTNSARVYNGAADAASTLLGAITSFAAGFVKIRWARWSKLLIAGVTATQAGLVFLLAHTRHPSSIWLCYAAFVLFRGSYQFLVPIATFQIASSLSKELCALVFGVNTFFATIVKTIITFIVSDVRGLGLPVRKQFQLYSVYFLILSIIYFLGAMLDGLRHCQRGHHPRQPPAQGLRSAAEEKAAQALSVQDKGLGGLQPAQSPPLSPEDSLGAVGPASLEQRQSDPYLAQAPAPQAAEFLSPVTTPSPCTLCSAQASGPEAADETCPQLAVHPPGVSKLGLQCLPSDGVQNVNQ.

N-acetylmethionine is present on Met-1. At 1-29 (MVPSSPAVEKQVPVEPGPDPELRSWRHLV) the chain is on the cytoplasmic side. Ser-5 is modified (phosphoserine). A helical membrane pass occupies residues 30 to 50 (CYLCFYGFMAQIRPGESFITP). Folate-binding residues include Ile-48 and Thr-49. Residues 51–64 (YLLGPDKNFTREQV) lie on the Extracellular side of the membrane. The N-linked (GlcNAc...) asparagine glycan is linked to Asn-58. The chain crosses the membrane as a helical span at residues 65-87 (TNEITPVLSYSYLAVLVPVFLLT). The Cytoplasmic segment spans residues 88 to 91 (DYLR). A helical membrane pass occupies residues 92 to 112 (YTPVLLLQGLSFVSVWLLLLL). Residues 113–116 (GHSV) lie on the Extracellular side of the membrane. A helical transmembrane segment spans residues 117–139 (AHMQLMELFYSVTMAARIAYSSY). 2 residues coordinate folate: Glu-123 and Arg-133. 5 residues coordinate 2',3'-cGAMP: Arg-133, Ile-134, Ser-137, Tyr-149, and Arg-157. Topologically, residues 140-153 (IFSLVRPARYQRVA) are cytoplasmic. A helical transmembrane segment spans residues 154 to 178 (GYSRAAVLLGVFTSSVLGQLLVTVG). Val-164 is a binding site for folate. The Extracellular segment spans residues 179 to 183 (RVSFS). A helical transmembrane segment spans residues 184–202 (TLNYISLAFLTFSVVLALF). The Cytoplasmic portion of the chain corresponds to 203–266 (LKRPKRSLFF…ELGDSLRRPQ (64 aa)). Ser-225 is subject to Phosphoserine. A helical transmembrane segment spans residues 267–292 (LRLWSLWWVFNSAGYYLVVYYVHILW). 3 residues coordinate folate: Tyr-281, Tyr-282, and Tyr-286. Tyr-282 is a 2',3'-cGAMP binding site. The Extracellular portion of the chain corresponds to 293-304 (NEVDPTTNSARV). A helical transmembrane segment spans residues 305–327 (YNGAADAASTLLGAITSFAAGFV). Ser-321 serves as a coordination point for 2',3'-cGAMP. Residues 328 to 333 (KIRWAR) lie on the Cytoplasmic side of the membrane. A helical transmembrane segment spans residues 334–354 (WSKLLIAGVTATQAGLVFLLA). The Extracellular segment spans residues 355-360 (HTRHPS). Residues 361–384 (SIWLCYAAFVLFRGSYQFLVPIAT) form a helical membrane-spanning segment. 2 residues coordinate folate: Arg-373 and Gln-377. The 2',3'-cGAMP site is built by Gln-377, Pro-381, Thr-384, Lys-393, Cys-396, and Phe-400. The Cytoplasmic portion of the chain corresponds to 385–398 (FQIASSLSKELCAL). A helical transmembrane segment spans residues 399–422 (VFGVNTFFATIVKTIITFIVSDVR). The segment at 407-419 (ATIVKTIITFIVS) is required for substrate-binding. Residues 423–430 (GLGLPVRK) lie on the Extracellular side of the membrane. Residues 431 to 455 (QFQLYSVYFLILSIIYFLGAMLDGL) traverse the membrane as a helical segment. Over 456-591 (RHCQRGHHPR…PSDGVQNVNQ (136 aa)) the chain is Cytoplasmic. 4 positions are modified to phosphoserine: Ser-474, Ser-485, Ser-499, and Ser-503.

It belongs to the reduced folate carrier (RFC) transporter (TC 2.A.48) family. Placenta, liver, and to a much smaller extent, in lung.

It is found in the cell membrane. The protein localises to the apical cell membrane. It localises to the basolateral cell membrane. It carries out the reaction 5-amino-1-(5-phospho-beta-D-ribosyl)imidazole-4-carboxamide(in) + (6S)-5-methyl-5,6,7,8-tetrahydrofolate(out) = 5-amino-1-(5-phospho-beta-D-ribosyl)imidazole-4-carboxamide(out) + (6S)-5-methyl-5,6,7,8-tetrahydrofolate(in). The enzyme catalyses 2',3'-cGAMP(out) + 5-amino-1-(5-phospho-beta-D-ribosyl)imidazole-4-carboxamide(in) = 2',3'-cGAMP(in) + 5-amino-1-(5-phospho-beta-D-ribosyl)imidazole-4-carboxamide(out). The catalysed reaction is 3',3'-cGAMP(out) + 5-amino-1-(5-phospho-beta-D-ribosyl)imidazole-4-carboxamide(in) = 3',3'-cGAMP(in) + 5-amino-1-(5-phospho-beta-D-ribosyl)imidazole-4-carboxamide(out). Functionally, antiporter that mediates the import of reduced folates or a subset of cyclic dinucleotides, driven by the export of organic anions. Acts as an importer of immunoreactive cyclic dinucleotides, such as cyclic GMP-AMP (2'-3'-cGAMP), an immune messenger produced in response to DNA virus in the cytosol, and its linkage isomer 3'-3'-cGAMP, thus playing a role in triggering larger immune responses. Mechanistically, acts as a secondary active transporter, which exports intracellular organic anions down their concentration gradients to facilitate the uptake of its substrates. Has high affinity for N5-methyltetrahydrofolate, the predominant circulating form of folate. Also mediates the import of antifolate drug methotrexate. 5-amino-4-imidazolecarboxamide riboside (AICAR), when phosphorylated to AICAR monophosphate, can serve as an organic anion for antiporter activity. The sequence is that of Reduced folate transporter from Homo sapiens (Human).